The sequence spans 154 residues: Myoglobin (154 aa).

The region spanning 2–148 is the Globin domain; that stretch reads GLSDGEWQLV…FRNDIAAKYK (147 aa). Residue S4 is modified to Phosphoserine. H65 is a binding site for nitrite. O2 is bound at residue H65. T68 carries the phosphothreonine modification. Residue H94 coordinates heme b.

This sequence belongs to the globin family. Monomeric.

The protein localises to the cytoplasm. It localises to the sarcoplasm. It catalyses the reaction Fe(III)-heme b-[protein] + nitric oxide + H2O = Fe(II)-heme b-[protein] + nitrite + 2 H(+). It carries out the reaction H2O2 + AH2 = A + 2 H2O. In terms of biological role, monomeric heme protein which primary function is to store oxygen and facilitate its diffusion within muscle tissues. Reversibly binds oxygen through a pentacoordinated heme iron and enables its timely and efficient release as needed during periods of heightened demand. Depending on the oxidative conditions of tissues and cells, and in addition to its ability to bind oxygen, it also has a nitrite reductase activity whereby it regulates the production of bioactive nitric oxide. Under stress conditions, like hypoxia and anoxia, it also protects cells against reactive oxygen species thanks to its pseudoperoxidase activity. The polypeptide is Myoglobin (MB) (Lagostomus maximus (Plains viscacha)).